The chain runs to 243 residues: Uridylate kinase (243 aa).

ATP is bound at residue 12-15 (KLSG). Residues 20–25 (GPGGSG) form an involved in allosteric activation by GTP region. Gly-56 provides a ligand contact to UMP. ATP-binding residues include Gly-57 and Arg-61. UMP-binding positions include Asp-76 and 137-144 (TGSPYFST). The ATP site is built by Asn-165, Tyr-171, and Asp-174.

It belongs to the UMP kinase family. As to quaternary structure, homohexamer.

It is found in the cytoplasm. It catalyses the reaction UMP + ATP = UDP + ADP. Its pathway is pyrimidine metabolism; CTP biosynthesis via de novo pathway; UDP from UMP (UMPK route): step 1/1. With respect to regulation, allosterically activated by GTP. Inhibited by UTP. Catalyzes the reversible phosphorylation of UMP to UDP. In Oenococcus oeni (strain ATCC BAA-331 / PSU-1), this protein is Uridylate kinase.